Reading from the N-terminus, the 429-residue chain is Histidine--tRNA ligase (429 aa).

Belongs to the class-II aminoacyl-tRNA synthetase family. As to quaternary structure, homodimer.

The protein localises to the cytoplasm. It catalyses the reaction tRNA(His) + L-histidine + ATP = L-histidyl-tRNA(His) + AMP + diphosphate + H(+). The polypeptide is Histidine--tRNA ligase (Streptococcus pneumoniae (strain Taiwan19F-14)).